A 465-amino-acid polypeptide reads, in one-letter code: Putative F-box/FBD/LRR-repeat protein At1g22000 (465 aa).

An F-box domain is found at 28–74; it reads ETRICALPDDLLLQILPHVPTKEAVATSILSKQWRYVWLMLPKLEFK. LRR repeat units follow at residues 154–181, 182–207, 210–230, 248–273, and 339–365; these read CLTL…SLHY, VVYK…SVHS, DDNL…NYDE, NEVE…HLSE, and ISLV…TIDN. The region spanning 373–424 is the FBD domain; that stretch reads SWNQPSSIPGCLLSHLETFRWRGYGGREDAKKLLMTYILANSKCLKTVEISL.

This chain is Putative F-box/FBD/LRR-repeat protein At1g22000, found in Arabidopsis thaliana (Mouse-ear cress).